The primary structure comprises 339 residues: Phenylalanine--tRNA ligase alpha subunit (339 aa).

A Mg(2+)-binding site is contributed by Glu-254.

It belongs to the class-II aminoacyl-tRNA synthetase family. Phe-tRNA synthetase alpha subunit type 1 subfamily. Tetramer of two alpha and two beta subunits. Mg(2+) serves as cofactor.

The protein localises to the cytoplasm. It catalyses the reaction tRNA(Phe) + L-phenylalanine + ATP = L-phenylalanyl-tRNA(Phe) + AMP + diphosphate + H(+). The sequence is that of Phenylalanine--tRNA ligase alpha subunit from Clostridium kluyveri (strain ATCC 8527 / DSM 555 / NBRC 12016 / NCIMB 10680 / K1).